Consider the following 287-residue polypeptide: MDEIVKNIREGTHVLLPFYETLPELNLSLGKSPLPSLEYGANYFLQISRVNDLNRMPTDMLKLFTHDIMLPESDLDKVYEILKINSVKYYGRSTKADAVVADLSAHNKLFKRERDAIKSNNHLTENNLYISDYKMLTFDVFRPLFDFVNEKYCIIKLPTLFGRGVIDTMRIYCSLFKNVRLLKCVSDSWLKDSAIMVASDVCKKNLDLFMSHVKSVTKSSSWKDVNSVQFSILNNPVDTEFINKFLEFSNRVYEALYYVHSLLYSSMTSDSKSIENKHQRRLVKLLL.

The protein belongs to the chordopoxvirinae mRNA-capping enzyme regulatory subunit family. As to quaternary structure, heterodimer of a catalytic and a regulatory subunit. Intrinsic methyltransferase activity of the catalytic subunit is weak and needs to be stimulated 30- to 50-fold by the regulatory subunit, which is itself catalytically inert.

It localises to the virion. Its function is as follows. Regulatory subunit of the mRNA cap enzyme which stabilizes the catalytic subunit and enhances its methyltransferase activity through an allosteric mechanism. Heterodimeric mRNA capping enzyme catalyzes the linkage of a N7-methyl-guanosine moiety to the first transcribed nucleotide (cap 0 structure), whereas the polymerase associated VP39 is responsible for a second methylation at the 2'-O position of the ribose (cap 1 structure). In terms of biological role, the heterodimeric enzyme is also involved in early viral gene transcription termination and intermediate viral gene transcription initiation. Early gene transcription termination requires the termination factor VTF, the DNA-dependent ATPase NPH-I and the Rap94 subunit of the viral RNA polymerase, as well as the presence of a specific termination motif. Binds, together with RAP94, to the termination motif 5'-UUUUUNU-3' in the nascent early mRNA. This chain is mRNA-capping enzyme regulatory subunit, found in Vaccinia virus (strain Ankara) (VACV).